The chain runs to 185 residues: ATP synthase subunit b, chloroplastic (185 aa).

A helical transmembrane segment spans residues 31–49; it reads LINSGVVLGLPVYSGKGVL.

The protein belongs to the ATPase B chain family. As to quaternary structure, F-type ATPases have 2 components, F(1) - the catalytic core - and F(0) - the membrane proton channel. F(1) has five subunits: alpha(3), beta(3), gamma(1), delta(1), epsilon(1). F(0) has four main subunits: a(1), b(1), b'(1) and c(10-14). The alpha and beta chains form an alternating ring which encloses part of the gamma chain. F(1) is attached to F(0) by a central stalk formed by the gamma and epsilon chains, while a peripheral stalk is formed by the delta, b and b' chains.

Its subcellular location is the plastid. The protein resides in the chloroplast thylakoid membrane. Its function is as follows. F(1)F(0) ATP synthase produces ATP from ADP in the presence of a proton or sodium gradient. F-type ATPases consist of two structural domains, F(1) containing the extramembraneous catalytic core and F(0) containing the membrane proton channel, linked together by a central stalk and a peripheral stalk. During catalysis, ATP synthesis in the catalytic domain of F(1) is coupled via a rotary mechanism of the central stalk subunits to proton translocation. Component of the F(0) channel, it forms part of the peripheral stalk, linking F(1) to F(0). The polypeptide is ATP synthase subunit b, chloroplastic (Huperzia lucidula (Shining clubmoss)).